A 555-amino-acid chain; its full sequence is Urocanate hydratase (555 aa).

NAD(+) contacts are provided by residues 52 to 53, Gln-130, 176 to 178, Glu-196, Arg-201, 242 to 243, 263 to 267, 273 to 274, and Tyr-322; these read GG, GMG, NA, QTSAH, and YL. Residue Cys-410 is part of the active site. Position 492 (Gly-492) interacts with NAD(+).

The protein belongs to the urocanase family. NAD(+) serves as cofactor.

It localises to the cytoplasm. It catalyses the reaction 4-imidazolone-5-propanoate = trans-urocanate + H2O. The protein operates within amino-acid degradation; L-histidine degradation into L-glutamate; N-formimidoyl-L-glutamate from L-histidine: step 2/3. Its function is as follows. Catalyzes the conversion of urocanate to 4-imidazolone-5-propionate. The sequence is that of Urocanate hydratase from Shewanella baltica (strain OS223).